Reading from the N-terminus, the 278-residue chain is Orotidine 5'-phosphate decarboxylase (278 aa).

Substrate-binding positions include Asp40, 62 to 64, 93 to 102, Tyr229, and Arg247; these read KTH and DRKFIDIGNT. Residue Lys95 is the Proton donor of the active site.

This sequence belongs to the OMP decarboxylase family.

The enzyme catalyses orotidine 5'-phosphate + H(+) = UMP + CO2. It functions in the pathway pyrimidine metabolism; UMP biosynthesis via de novo pathway; UMP from orotate: step 2/2. This is Orotidine 5'-phosphate decarboxylase (pyrG) from Aspergillus fumigatus (strain ATCC MYA-4609 / CBS 101355 / FGSC A1100 / Af293) (Neosartorya fumigata).